The sequence spans 83 residues: Mu-theraphotoxin-Hhn2n (83 aa).

Residues 1 to 21 (MKASMYLALAGLVLLFVVGYA) form the signal peptide. The propeptide occupies 22-48 (SESEEKEFPRELLSKIFAVDDFKGEER). Intrachain disulfides connect C50/C65, C57/C70, and C64/C77. A Leucine amide modification is found at L81.

This sequence belongs to the neurotoxin 10 (Hwtx-1) family. 15 (Hntx-3) subfamily. Monomer. Expressed by the venom gland.

The protein resides in the secreted. Lethal neurotoxin. Selectively blocks tetrodotoxin-sensitive voltage-gated sodium channels (Nav). Does not affect tetrodotoxin-resistant voltage-gated sodium channels or calcium channels. This chain is Mu-theraphotoxin-Hhn2n, found in Cyriopagopus hainanus (Chinese bird spider).